The chain runs to 276 residues: Glutamate racemase (276 aa).

Residues 10–11 and 42–43 contribute to the substrate site; these read DS and YG. Cys74 (proton donor/acceptor) is an active-site residue. 75–76 provides a ligand contact to substrate; the sequence is NT. Catalysis depends on Cys185, which acts as the Proton donor/acceptor. Residue 186–187 coordinates substrate; that stretch reads TH.

Belongs to the aspartate/glutamate racemases family.

The catalysed reaction is L-glutamate = D-glutamate. It participates in cell wall biogenesis; peptidoglycan biosynthesis. Functionally, provides the (R)-glutamate required for cell wall biosynthesis. The polypeptide is Glutamate racemase (Levilactobacillus brevis (Lactobacillus brevis)).